A 270-amino-acid polypeptide reads, in one-letter code: Phosphonates import ATP-binding protein PhnC 2 (270 aa).

The 244-residue stretch at 2-245 folds into the ABC transporter domain; the sequence is LVVEGLTCRF…IARELYDLEA (244 aa). Residue 34 to 41 participates in ATP binding; sequence GRSGAGKS.

The protein belongs to the ABC transporter superfamily. Phosphonates importer (TC 3.A.1.9.1) family. In terms of assembly, the complex is composed of two ATP-binding proteins (PhnC), two transmembrane proteins (PhnE) and a solute-binding protein (PhnD).

Its subcellular location is the cell inner membrane. It carries out the reaction phosphonate(out) + ATP + H2O = phosphonate(in) + ADP + phosphate + H(+). In terms of biological role, part of the ABC transporter complex PhnCDE involved in phosphonates import. Responsible for energy coupling to the transport system. The polypeptide is Phosphonates import ATP-binding protein PhnC 2 (Rhodopseudomonas palustris (strain BisA53)).